A 638-amino-acid chain; its full sequence is MKSVHSSPQNTSHTIMTFYPTMEEFADFNTYVAYMESQGAHRAGLAKVIPPKEWKARQMYDDIEDILIATPLQQVTSGQGGVFTQYHKKKKAMRVGQYRHLANSKKYQTPPHQNFADLEQRYWKSHPGNPPIYGADISGSLFEESTKQWNLGHLGTILDLLEQECGVVIEGVNTPYLYFGMWKTTFAWHTEDMDLYSINYLHFGEPKTWYVVPPEHGQRLECLARELFPGNSRGCEGFLRHKVALISPTVLKKNGIPFNRMTQEAGEFMVTFPYGYHAGFNHGFNCAEAINFATPRWIDYGKVASQCSCGEARVTFSMDAFVRILQPESYELWKHRQDLTVVDYMEPRVAESQEPSNWREDIALRRAALGLRHLRNHITSCPTRTVAPRLCYNPKGGGTDAVPGSAIQALETSAWVLPPSTGRWGPCRGCGRGRGRGRGRGRRPRELGTEETTVQSAAKRRLSVGTGSRAPGRKPQLQFADEALTDKPAPLSGGLPHFAKASGCCCAPDLQPLGPPLDPDEPMHPGPCLLSLDSTASSLPLVVPMTPPSVTVPLITLSRDTGGDWKSPVNLAKVVAMDHSYASRVPVPTKFSRISWAPDSSAGAKARQRYATEFGDIFLQCMINPLDPWPLNMVSNVK.

Positions 15–57 constitute a JmjN domain; that stretch reads IMTFYPTMEEFADFNTYVAYMESQGAHRAGLAKVIPPKEWKAR. A 2-oxoglutarate-binding site is contributed by tyrosine 133. The 167-residue stretch at 143–309 folds into the JmjC domain; the sequence is EESTKQWNLG…YGKVASQCSC (167 aa). The Fe cation site is built by histidine 189 and glutamate 191. Residues asparagine 199 and lysine 207 each contribute to the 2-oxoglutarate site. 2 residues coordinate Zn(2+): cysteine 235 and histidine 241. Residue lysine 242 participates in 2-oxoglutarate binding. Histidine 277 is a Fe cation binding site. The Zn(2+) site is built by cysteine 307 and cysteine 309. The disordered stretch occupies residues 426–474; the sequence is PCRGCGRGRGRGRGRGRRPRELGTEETTVQSAAKRRLSVGTGSRAPGRK. The span at 431–443 shows a compositional bias: basic residues; sequence GRGRGRGRGRGRR.

This sequence belongs to the JHDM3 histone demethylase family. Fe(2+) is required as a cofactor.

It localises to the nucleus. It catalyses the reaction N(6),N(6),N(6)-trimethyl-L-lysyl(9)-[histone H3] + 2 2-oxoglutarate + 2 O2 = N(6)-methyl-L-lysyl(9)-[histone H3] + 2 formaldehyde + 2 succinate + 2 CO2. Probable histone demethylase that specifically demethylates 'Lys-9' of histone H3, thereby playing a central role in histone code. The polypeptide is Probable lysine-specific demethylase 4F (Homo sapiens (Human)).